The following is a 247-amino-acid chain: ATP synthase subunit a, chloroplastic (247 aa).

5 helical membrane passes run 36 to 56, 95 to 115, 134 to 154, 199 to 219, and 220 to 240; these read GQVL…SIAG, IPFL…GALI, INTT…AGFS, LVVG…IMLL, and GLFT…AYIG.

It belongs to the ATPase A chain family. In terms of assembly, F-type ATPases have 2 components, CF(1) - the catalytic core - and CF(0) - the membrane proton channel. CF(1) has five subunits: alpha(3), beta(3), gamma(1), delta(1), epsilon(1). CF(0) has four main subunits: a, b, b' and c.

It is found in the plastid. It localises to the chloroplast thylakoid membrane. Its function is as follows. Key component of the proton channel; it plays a direct role in the translocation of protons across the membrane. This is ATP synthase subunit a, chloroplastic from Tupiella akineta (Green alga).